Consider the following 779-residue polypeptide: Neutral ceramidase 1 (779 aa).

Residue Ser-350 is the Nucleophile of the active site. 3 N-linked (GlcNAc...) asparagine glycosylation sites follow: Asn-368, Asn-432, and Asn-667.

The protein belongs to the neutral ceramidase family. Mostly expressed in stems, leaves, roots and siliques, and, to a lower extent, in flowers.

It localises to the secreted. Its subcellular location is the endoplasmic reticulum. The protein localises to the golgi apparatus. The enzyme catalyses an N-acylsphing-4-enine + H2O = sphing-4-enine + a fatty acid. Hydrolyzes the sphingolipid ceramide into sphingosine and free fatty acid. Regulates sphingolipid homeostasis. Promotes oxidative stress resistance. This chain is Neutral ceramidase 1, found in Arabidopsis thaliana (Mouse-ear cress).